The chain runs to 424 residues: Serine--tRNA ligase (424 aa).

232 to 234 is a binding site for L-serine; the sequence is TAE. Residue 263-265 participates in ATP binding; sequence RQE. An L-serine-binding site is contributed by glutamate 286. 350-353 contacts ATP; sequence EIGS. Serine 386 contributes to the L-serine binding site.

This sequence belongs to the class-II aminoacyl-tRNA synthetase family. Type-1 seryl-tRNA synthetase subfamily. Homodimer. The tRNA molecule binds across the dimer.

It is found in the cytoplasm. It catalyses the reaction tRNA(Ser) + L-serine + ATP = L-seryl-tRNA(Ser) + AMP + diphosphate + H(+). The enzyme catalyses tRNA(Sec) + L-serine + ATP = L-seryl-tRNA(Sec) + AMP + diphosphate + H(+). Its pathway is aminoacyl-tRNA biosynthesis; selenocysteinyl-tRNA(Sec) biosynthesis; L-seryl-tRNA(Sec) from L-serine and tRNA(Sec): step 1/1. Its function is as follows. Catalyzes the attachment of serine to tRNA(Ser). Is also able to aminoacylate tRNA(Sec) with serine, to form the misacylated tRNA L-seryl-tRNA(Sec), which will be further converted into selenocysteinyl-tRNA(Sec). This is Serine--tRNA ligase from Onion yellows phytoplasma (strain OY-M).